The following is a 513-amino-acid chain: Galactose-1-phosphate uridylyltransferase (513 aa).

The protein belongs to the galactose-1-phosphate uridylyltransferase type 2 family.

The protein localises to the cytoplasm. The catalysed reaction is alpha-D-galactose 1-phosphate + UDP-alpha-D-glucose = alpha-D-glucose 1-phosphate + UDP-alpha-D-galactose. Its pathway is carbohydrate metabolism; galactose metabolism. The chain is Galactose-1-phosphate uridylyltransferase (galT) from Bacillus subtilis (strain 168).